Reading from the N-terminus, the 70-residue chain is Large ribosomal subunit protein eL38 (70 aa).

It belongs to the eukaryotic ribosomal protein eL38 family.

This is Large ribosomal subunit protein eL38 (RpL38) from Julodis onopordi (Jewel beetle).